We begin with the raw amino-acid sequence, 714 residues long: Fimbrin-3 (714 aa).

The 49-residue stretch at 7–55 folds into the EF-hand domain; it reads VIVSDPWLQSQLTQVELRSLNSKFVALKNQSGKVTLEDLPSVLVKVKSL. Calponin-homology (CH) domains are found at residues 124-241, 269-372, 393-499, and 514-622; these read QSEK…KIQL, LPPE…HERN, CRDE…RTHM, and DMTD…YWSL. Actin-binding regions lie at residues 124-372 and 393-622; these read QSEK…HERN and CRDE…YWSL. The span at 628-662 shows a compositional bias: low complexity; that stretch reads SSESSSSSSDSSSTHSTTTTCTSTCTSTDASPAPS. A disordered region spans residues 628–694; sequence SSESSSSSSD…NEVSSLTIEE (67 aa). Positions 670 to 680 are enriched in polar residues; the sequence is SSLNGEVSSLT. Positions 681 to 694 are enriched in acidic residues; the sequence is IEEDNEVSSLTIEE.

In terms of assembly, interacts with F-actin.

The protein resides in the cytoplasm. The protein localises to the cytoskeleton. Cross-links actin filaments (F-actin). Stabilizes and prevents F-actin depolymerization mediated by profilin. May regulate actin cytoarchitecture, cell cycle, cell division, cell elongation and cytoplasmic tractus. This chain is Fimbrin-3, found in Arabidopsis thaliana (Mouse-ear cress).